We begin with the raw amino-acid sequence, 271 residues long: uncharacterized protein (271 aa).

It belongs to the anhydro-N-acetylmuramic acid kinase family.

This is an uncharacterized protein from Yersinia enterocolitica.